Reading from the N-terminus, the 79-residue chain is Cytochrome b (79 aa).

3 helical membrane-spanning segments follow: residues 1–7 (TALLLAM), 31–52 (WLIR…YLHI), and 67–79 (WNIG…TLMA). Heme b is bound by residues His37 and His51.

It belongs to the cytochrome b family. The cytochrome bc1 complex contains 11 subunits: 3 respiratory subunits (MT-CYB, CYC1 and UQCRFS1), 2 core proteins (UQCRC1 and UQCRC2) and 6 low-molecular weight proteins (UQCRH/QCR6, UQCRB/QCR7, UQCRQ/QCR8, UQCR10/QCR9, UQCR11/QCR10 and a cleavage product of UQCRFS1). This cytochrome bc1 complex then forms a dimer. The cofactor is heme b.

The protein localises to the mitochondrion inner membrane. Component of the ubiquinol-cytochrome c reductase complex (complex III or cytochrome b-c1 complex) that is part of the mitochondrial respiratory chain. The b-c1 complex mediates electron transfer from ubiquinol to cytochrome c. Contributes to the generation of a proton gradient across the mitochondrial membrane that is then used for ATP synthesis. This is Cytochrome b (MT-CYB) from Corcorax melanoramphos (White-winged chough).